The primary structure comprises 110 residues: UPF0060 membrane protein MMAR_2961 (110 aa).

The next 4 helical transmembrane spans lie at Ile6–Gly26, Gly32–Leu52, Ile61–Asp81, and Ile90–His110.

This sequence belongs to the UPF0060 family.

Its subcellular location is the cell membrane. This Mycobacterium marinum (strain ATCC BAA-535 / M) protein is UPF0060 membrane protein MMAR_2961.